Reading from the N-terminus, the 352-residue chain is UPF0324 membrane protein RA0957 (352 aa).

10 helical membrane-spanning segments follow: residues 24–43 (VVSYFPGLAVAVLIAISAQF), 48–67 (YGAPATLMALLLGMSLNFLS), 104–126 (LGVSLLCLVTTALACTILFAIIV), 136–158 (LSLLTGGAVAICGASAAVALNAV), 169–191 (LALTIVAITLLSTSAMVLYPVLA), 201–223 (SGVFIGGTIHDVAQVVGAGFAMS), 235–257 (IVRVSLLAPTIIAVLIMVTVLGA), 272–294 (GFVLGFAFLAALKSMGFLPAAAG), 301–318 (SRWLLLIALGAVGLKTSV), and 328–350 (HVTLALLATAFLAAFIVVGLLWY).

The protein belongs to the UPF0324 family.

Its subcellular location is the cell membrane. This chain is UPF0324 membrane protein RA0957, found in Rhizobium meliloti (strain 1021) (Ensifer meliloti).